A 582-amino-acid polypeptide reads, in one-letter code: NAB transcription cofactor mab-10 (582 aa).

The span at 1 to 70 (MSSSSSSSLP…SSSSQRQSTS (70 aa)) shows a compositional bias: low complexity. Disordered stretches follow at residues 1–84 (MSSS…MPTP), 257–287 (SDQQ…PAGI), 333–365 (PPSS…SPFL), and 516–582 (SRKR…LPES). The segment at 83–161 (TPTTLSEWQL…EYSQDQTAFN (79 aa)) is NCD1. Low complexity-rich tracts occupy residues 257–276 (SDQQ…STSS) and 333–345 (PPSS…PSTS). Residues 396 to 519 (LSTAQISRLA…GYNYAKSRKR (124 aa)) form an NCD2 region. The segment covering 573 to 582 (EKMKGELPES) has biased composition (basic and acidic residues).

Belongs to the NAB family. In terms of assembly, interacts with transcription factor lin-29 (via C-terminus).

The protein localises to the nucleus. Its function is as follows. Transcriptional cofactor. Heterochronic protein, involved in timing of a subset of differentiation events during the larval-to-adult transition. Promotes hypodermal terminal differentiation, together with transcription factor lin-29, perhaps as part of a transcriptional complex. Involved in regulating molting by repressing the expression of nuclear hormone receptors nhr-23 and nhr-25 in the adult hypoderm, probably acting in concert with lin-29. In Caenorhabditis elegans, this protein is NAB transcription cofactor mab-10.